The chain runs to 493 residues: tRNA(Ile)-lysidine synthase (493 aa).

Ser26–Ser31 is an ATP binding site.

The protein belongs to the tRNA(Ile)-lysidine synthase family.

It is found in the cytoplasm. It carries out the reaction cytidine(34) in tRNA(Ile2) + L-lysine + ATP = lysidine(34) in tRNA(Ile2) + AMP + diphosphate + H(+). Functionally, ligates lysine onto the cytidine present at position 34 of the AUA codon-specific tRNA(Ile) that contains the anticodon CAU, in an ATP-dependent manner. Cytidine is converted to lysidine, thus changing the amino acid specificity of the tRNA from methionine to isoleucine. The sequence is that of tRNA(Ile)-lysidine synthase from Bartonella henselae (strain ATCC 49882 / DSM 28221 / CCUG 30454 / Houston 1) (Rochalimaea henselae).